The sequence spans 660 residues: Tripartite terminase subunit 3 (660 aa).

The Walker A motif motif lies at 203–210 (VPRRHGKT). Residues 294 to 299 (ILLVDE) carry the Walker B motif motif. The active-site For ATPase activity is Glu299. Active-site for nuclease activity residues include Asp452, Glu523, and Asp637.

It belongs to the herpesviridae TRM3 protein family. In terms of assembly, interacts with the terminase subunits TRM1 and TRM2. Interacts with portal protein.

The protein localises to the host nucleus. Its function is as follows. Component of the molecular motor that translocates viral genomic DNA in empty capsid during DNA packaging. Forms a tripartite terminase complex together with TRM1 and TRM2 in the host cytoplasm. Once the complex reaches the host nucleus, it interacts with the capsid portal vertex. This portal forms a ring in which genomic DNA is translocated into the capsid. TRM3 carries an RNase H-like nuclease activity that plays an important role for the cleavage of concatemeric viral DNA into unit length genomes. The polypeptide is Tripartite terminase subunit 3 (Elephas maximus (Indian elephant)).